The chain runs to 61 residues: Small ribosomal subunit protein uS14 (61 aa).

Residues Cys24, Cys27, Cys40, and Cys43 each contribute to the Zn(2+) site.

It belongs to the universal ribosomal protein uS14 family. Zinc-binding uS14 subfamily. As to quaternary structure, part of the 30S ribosomal subunit. Contacts proteins S3 and S10. Zn(2+) serves as cofactor.

Functionally, binds 16S rRNA, required for the assembly of 30S particles and may also be responsible for determining the conformation of the 16S rRNA at the A site. The polypeptide is Small ribosomal subunit protein uS14 (Petrotoga mobilis (strain DSM 10674 / SJ95)).